The following is a 546-amino-acid chain: Aladin (546 aa).

C2 is modified (N-acetylcysteine). A Phosphoserine modification is found at S33. WD repeat units follow at residues 149-188, 191-230, 243-282, and 285-324; these read WSSC…VPSL, RLQR…LSTR, GHTP…CVPL, and FRGG…CEAW. Phosphoserine is present on residues S495, S511, S522, S525, and S541. A disordered region spans residues 500–546; it reads RAQEPPAGGGGSIHEVPLFTETSPTSAPWDPLPGQSSAQPHSPHSHL. Residues 534 to 546 show a composition bias toward low complexity; that stretch reads QSSAQPHSPHSHL. The short motif at 544-546 is the Microbody targeting signal element; sequence SHL.

Interacts with NDC1, the interaction is required for nuclear pore localization. Interacts with the inactive form aurora kinase AURKA. Interacts with PGRMC2. Widely expressed. Particularly abundant in cerebellum, corpus callosum, adrenal gland, pituitary gland, gastrointestinal structures and fetal lung.

The protein resides in the nucleus. Its subcellular location is the nuclear pore complex. It localises to the cytoplasm. The protein localises to the cytoskeleton. It is found in the spindle pole. The protein resides in the nucleus envelope. In terms of biological role, plays a role in the normal development of the peripheral and central nervous system. Required for the correct localization of aurora kinase AURKA and the microtubule minus end-binding protein NUMA1 as well as a subset of AURKA targets which ensures proper spindle formation and timely chromosome alignment. The sequence is that of Aladin (Aaas) from Mus musculus (Mouse).